The following is a 409-amino-acid chain: Autotransproter heptosyltransferase BAHTCr (409 aa).

The ADP-D-glycero-beta-D-manno-heptose site is built by Thr107, Leu108, and Gly109. The Proton acceptor role is filled by Asp110. ADP-D-glycero-beta-D-manno-heptose contacts are provided by Gln224, Thr226, Lys230, Arg257, Gly302, and Glu326. Cys339, Cys342, Cys358, and Cys370 together coordinate Fe(3+).

The protein belongs to the glycosyltransferase 9 family. Homododecamer composed of 6 homodimers forming a ring. It depends on Fe(3+) as a cofactor.

It is found in the cytoplasm. It carries out the reaction ADP-D-glycero-beta-D-manno-heptose + L-seryl-[protein] = O-(D-glycero-alpha-D-manno-heptosyl)-L-seryl-[protein] + ADP + H(+). The catalysed reaction is ADP-L-glycero-beta-D-manno-heptose + L-seryl-[protein] = O-(L-glycero-alpha-D-manno-heptosyl)-L-seryl-[protein] + ADP + H(+). In terms of biological role, glycosylates autotransporter CARC. By glycosylating CARC, involved in the colonization of the mouse host gastrointestinal tract. The chain is Autotransproter heptosyltransferase BAHTCr from Citrobacter rodentium (strain ICC168) (Citrobacter freundii biotype 4280).